The following is a 1742-amino-acid chain: Unconventional myosin-Vc (1742 aa).

A2 is modified (N-acetylalanine). Positions T8 to N62 constitute a Myosin N-terminal SH3-like domain. The Myosin motor domain occupies V67–L753. G161–T168 lines the ATP pocket. The segment at L632–D654 is actin-binding. IQ domains are found at residues L756–E779, R780–K806, E807–L829, I830–L854, and E855–N884. A coiled-coil region spans residues N884–V1351. A Dilute domain is found at N1421–S1697.

It belongs to the TRAFAC class myosin-kinesin ATPase superfamily. Myosin family. Expressed chiefly in non-neuronal tissues. Particularly abundant in epithelial and glandular tissues including pancreas, prostate, mammary, stomach, colon and lung.

Its function is as follows. May be involved in transferrin trafficking. Likely to power actin-based membrane trafficking in many physiologically crucial tissues. The protein is Unconventional myosin-Vc (MYO5C) of Homo sapiens (Human).